Consider the following 375-residue polypeptide: Histidine biosynthesis bifunctional protein HisB (375 aa).

The histidinol-phosphatase stretch occupies residues 1 to 168 (MTPILFVDRD…GIAHELADAP (168 aa)). Aspartate 8 serves as the catalytic Nucleophile. Mg(2+)-binding residues include aspartate 8, aspartate 10, and aspartate 128. Residue aspartate 10 is the Proton donor of the active site. An imidazoleglycerol-phosphate dehydratase region spans residues 169-375 (RRAVVQRNTK…TALPSTKGAL (207 aa)).

The protein in the N-terminal section; belongs to the histidinol-phosphatase family. This sequence in the C-terminal section; belongs to the imidazoleglycerol-phosphate dehydratase family. Requires Mg(2+) as cofactor.

It localises to the cytoplasm. The enzyme catalyses D-erythro-1-(imidazol-4-yl)glycerol 3-phosphate = 3-(imidazol-4-yl)-2-oxopropyl phosphate + H2O. It catalyses the reaction L-histidinol phosphate + H2O = L-histidinol + phosphate. It participates in amino-acid biosynthesis; L-histidine biosynthesis; L-histidine from 5-phospho-alpha-D-ribose 1-diphosphate: step 6/9. The protein operates within amino-acid biosynthesis; L-histidine biosynthesis; L-histidine from 5-phospho-alpha-D-ribose 1-diphosphate: step 8/9. The polypeptide is Histidine biosynthesis bifunctional protein HisB (Xanthomonas campestris pv. campestris (strain 8004)).